The sequence spans 294 residues: Protein RarD (294 aa).

Residues 1–11 (MDAKQTRQGVL) are Cytoplasmic-facing. Residues 12–34 (LALAAYFIWGIAPAYFKLIYYVP) traverse the membrane as a helical segment. The EamA domain occupies 18–145 (FIWGIAPAYF…AVCGVLVQLW (128 aa)). Over 35–37 (ADE) the chain is Periplasmic. Residues 38–60 (ILTHRVIWSFFFMVALLSVSRQW) traverse the membrane as a helical segment. Topologically, residues 61 to 72 (RQVKRLLKTPKK) are cytoplasmic. Residues 73 to 95 (IFLLALSAVLVGGNWLLFIWAVN) traverse the membrane as a helical segment. Topologically, residues 96–99 (NHHM) are periplasmic. The chain crosses the membrane as a helical span at residues 100–122 (LEASLGYFINPLVNILLGMIFLG). Topologically, residues 123–128 (ERFRRM) are cytoplasmic. Residues 129–146 (QWLAVILAVCGVLVQLWT) form a helical membrane-spanning segment. The Periplasmic segment spans residues 147 to 149 (FGS). A helical membrane pass occupies residues 150–167 (LPIIALGLAFSFAFYGLV). The Cytoplasmic segment spans residues 168-179 (RKKIAVEAQTGM). A helical membrane pass occupies residues 180-197 (LVETLWLLPVAAIYLFSI). The Periplasmic segment spans residues 198–211 (ADSATSHMGQNALS). Residues 212–234 (LNLLLMAAGVVTTIPLLCFTGAA) traverse the membrane as a helical segment. The Cytoplasmic segment spans residues 235-238 (TRLR). Residues 239–261 (LSTLGFFQYIGPTLMFLLAVTFY) traverse the membrane as a helical segment. Over 262 to 270 (GEVPGADKM) the chain is Periplasmic. Residues 271–290 (VTFAFIWVALAIFVMDAIYT) form a helical membrane-spanning segment. Residues 291 to 294 (QRKK) lie on the Cytoplasmic side of the membrane.

It belongs to the EamA transporter family.

It is found in the cell inner membrane. This chain is Protein RarD (rarD), found in Salmonella typhi.